We begin with the raw amino-acid sequence, 214 residues long: Epoxide hydrolase EphH (214 aa).

Serine 28 serves as the catalytic Nucleophile. Residues aspartate 156 and histidine 186 each act as charge relay system in the active site.

Belongs to the AB hydrolase superfamily.

It carries out the reaction an epoxide + H2O = an ethanediol. Its activity is regulated as follows. Inhibited by AUDA, a known epoxide hydrolase inhibitor. Catalyzes the hydrolysis of epoxide-containing substrates. In vitro, catalyzes the hydrolysis of the synthetic compounds PHOME and styrene oxide. Plays an essential role in subverting phagosomal acidification. Plays a major role in the survival of M.tuberculosis (Mtb) during in vitro acidic stress and protects Mtb in response to phagosomal acidification inside macrophages. Also supports Mtb growth under the nutrient-deprived condition at pH 7.0. The sequence is that of Epoxide hydrolase EphH from Mycobacterium tuberculosis (strain ATCC 25618 / H37Rv).